Reading from the N-terminus, the 183-residue chain is Crossover junction endodeoxyribonuclease RuvC (183 aa).

Active-site residues include Asp-16, Glu-75, and Asp-147. Residues Asp-16, Glu-75, and Asp-147 each coordinate Mg(2+).

Belongs to the RuvC family. In terms of assembly, homodimer which binds Holliday junction (HJ) DNA. The HJ becomes 2-fold symmetrical on binding to RuvC with unstacked arms; it has a different conformation from HJ DNA in complex with RuvA. In the full resolvosome a probable DNA-RuvA(4)-RuvB(12)-RuvC(2) complex forms which resolves the HJ. Mg(2+) is required as a cofactor.

Its subcellular location is the cytoplasm. The catalysed reaction is Endonucleolytic cleavage at a junction such as a reciprocal single-stranded crossover between two homologous DNA duplexes (Holliday junction).. Functionally, the RuvA-RuvB-RuvC complex processes Holliday junction (HJ) DNA during genetic recombination and DNA repair. Endonuclease that resolves HJ intermediates. Cleaves cruciform DNA by making single-stranded nicks across the HJ at symmetrical positions within the homologous arms, yielding a 5'-phosphate and a 3'-hydroxyl group; requires a central core of homology in the junction. The consensus cleavage sequence is 5'-(A/T)TT(C/G)-3'. Cleavage occurs on the 3'-side of the TT dinucleotide at the point of strand exchange. HJ branch migration catalyzed by RuvA-RuvB allows RuvC to scan DNA until it finds its consensus sequence, where it cleaves and resolves the cruciform DNA. The chain is Crossover junction endodeoxyribonuclease RuvC from Azoarcus sp. (strain BH72).